A 100-amino-acid polypeptide reads, in one-letter code: Sweet protein mabinlin-4 (100 aa).

4 cysteine pairs are disulfide-bonded: C4/C49, C17/C38, C39/C87, and C51/C95.

This sequence belongs to the 2S seed storage albumins family. As to quaternary structure, heterodimer of a small A and a large B chain linked by disulfide bonds.

Functionally, heat stable 2S seed storage protein having sweetness-inducing activity. The chain is Sweet protein mabinlin-4 from Capparis masaikai (Mabinlang).